We begin with the raw amino-acid sequence, 1367 residues long: Histone acetyltransferase HAC2 (1367 aa).

Residues 110–151 (TSSIPGSSGSASETNSGSDITKQDFKNDSPSDSKKVQGSSTS) are disordered. Positions 111–127 (SSIPGSSGSASETNSGS) are enriched in low complexity. Residues 130 to 144 (TKQDFKNDSPSDSKK) are compositionally biased toward basic and acidic residues. Tandem repeats lie at residues 188–200 (KLGT…EPMK), 223–235 (KVYS…TTTK), 251–263 (KLGT…EPMK), 286–298 (KVYS…TTTK), 314–326 (KLGT…EPMK), 349–361 (KVYS…TTTK), 377–389 (KLGT…EPMK), 418–430 (KLGT…EPMK), 432–444 (DEGS…TTNK), 459–471 (KLGI…EPMK), 473–485 (DEGT…TTNK), and 500–512 (KLGI…EPMK). The segment at 188–512 (KLGTVVDIVE…IGVDIVEPMK (325 aa)) is 12 X 13 AA approximate repeats. Residues 688–765 (HQICSPCHSR…EYICPTCLLE (78 aa)) form a PHD-type zinc finger. The 434-residue stretch at 780-1213 (DSGAKDLPET…ILHHLHTSNK (434 aa)) folds into the CBP/p300-type HAT domain. Residues 903 to 905 (LDS), 922 to 923 (RT), and tryptophan 978 contribute to the acetyl-CoA site. The ZZ-type 1; degenerate zinc-finger motif lies at 1094–1157 (ELNYSCTRCS…QLSKVQVNGV (64 aa)). The Zn(2+) site is built by cysteine 1099, cysteine 1102, cysteine 1123, cysteine 1126, cysteine 1225, cysteine 1228, cysteine 1240, cysteine 1243, cysteine 1249, cysteine 1252, histidine 1261, and histidine 1263. The ZZ-type 2 zinc finger occupies 1220 to 1273 (SSSLTCTACKKDVSTTIYFPCLLCPDYRACTGCYTKNRTLRHLHIFPTLPSANR). The TAZ-type zinc-finger motif lies at 1274 to 1359 (APSRTVMVLE…NCPVPQCRDR (86 aa)).

As to expression, rosette leaves, stems and flowers.

The protein localises to the nucleus. It catalyses the reaction L-lysyl-[protein] + acetyl-CoA = N(6)-acetyl-L-lysyl-[protein] + CoA + H(+). In terms of biological role, acetyltransferase enzyme. Acetylates histones, giving a specific tag for transcriptional activation. No acetyltransferase activity found in vitro. The chain is Histone acetyltransferase HAC2 (HAC2) from Arabidopsis thaliana (Mouse-ear cress).